The following is a 210-amino-acid chain: 23 kDa jasmonate-induced protein (210 aa).

The protein belongs to the jasmonate-induced protein family.

In Hordeum vulgare (Barley), this protein is 23 kDa jasmonate-induced protein.